The primary structure comprises 108 residues: Mitochondrial protein PET191 (108 aa).

Residues 18-64 (RSPCVMIERHNPQECLDNPELNKDLPELCIAQMKAFLDCKRGIVDMT) enclose the CHCH domain. Positions 21 to 32 (CVMIERHNPQEC) match the Cx10C motif motif. 2 disulfide bridges follow: cysteine 21/cysteine 56 and cysteine 32/cysteine 46. The Cx9C motif motif lies at 46-56 (CIAQMKAFLDC).

Belongs to the PET191 family.

Its subcellular location is the mitochondrion intermembrane space. Functionally, involved in the assembly of cytochrome c oxidase. The sequence is that of Mitochondrial protein PET191 (PET191) from Saccharomyces cerevisiae (strain ATCC 204508 / S288c) (Baker's yeast).